The chain runs to 128 residues: NHP2-like protein 1 (128 aa).

An N-acetylmethionine modification is found at M1. T2 is modified (N-acetylthreonine; in NHP2-like protein 1, N-terminally processed). An N6-acetyllysine modification is found at K21. The segment at 36-48 (RKGANEATKTLNR) is interaction with U4 snRNA and U4atac snRNA. The interval 96-128 (SRPVIACSVTIKEGSQLKQQIQSIQQSIERLLV) is important for U4 snRNA-binding. S122 carries the phosphoserine modification.

Belongs to the eukaryotic ribosomal protein eL8 family. As to quaternary structure, identified in the spliceosome B complex. Component of the U4/U6-U5 tri-snRNP complex composed of the U4, U6 and U5 snRNAs and at least PRPF3, PRPF4, PRPF6, PRPF8, PRPF31, SNRNP200, TXNL4A, WDR57, SNRNP40, DDX23, CD2BP2, PPIH, NHP2L1, EFTUD2, SART1 and USP39. Interacts with RAD17 and PRPF31. The complex formed by SNU13 and PRPF31 binds U4 snRNA. The complex formed by SNU13 and PRPF31 also binds U4atac snRNA, a characteristic component of specific, less abundant spliceosomal complexes. Part of the small subunit (SSU) processome, composed of more than 70 proteins and the RNA chaperone small nucleolar RNA (snoRNA) U3. Core component of box C/D small nucleolar ribonucleoprotein (snoRNP) particles; the core proteins SNU13, NOP56, NOP58 and FBL or FBLL1 assemble stepwise onto the snoRNA.

It is found in the nucleus. The protein resides in the nucleolus. Functionally, part of the small subunit (SSU) processome, first precursor of the small eukaryotic ribosomal subunit. During the assembly of the SSU processome in the nucleolus, many ribosome biogenesis factors, an RNA chaperone and ribosomal proteins associate with the nascent pre-rRNA and work in concert to generate RNA folding, modifications, rearrangements and cleavage as well as targeted degradation of pre-ribosomal RNA by the RNA exosome. Involved in pre-mRNA splicing as component of the spliceosome. Binds to the 5'-stem-loop of U4 snRNA and thereby contributes to spliceosome assembly. The protein undergoes a conformational change upon RNA-binding. Core component of box C/D small nucleolar ribonucleoprotein (snoRNP) complexes that function in methylation of multiple sites on ribosomal RNAs (rRNAs) and messenger RNAs (mRNAs). The chain is NHP2-like protein 1 from Bos taurus (Bovine).